A 365-amino-acid chain; its full sequence is UDP-N-acetylglucosamine--N-acetylmuramyl-(pentapeptide) pyrophosphoryl-undecaprenol N-acetylglucosamine transferase (365 aa).

UDP-N-acetyl-alpha-D-glucosamine contacts are provided by residues 12 to 14 (TGG), N123, R166, S194, and Q295.

It belongs to the glycosyltransferase 28 family. MurG subfamily.

It is found in the cell inner membrane. It catalyses the reaction di-trans,octa-cis-undecaprenyl diphospho-N-acetyl-alpha-D-muramoyl-L-alanyl-D-glutamyl-meso-2,6-diaminopimeloyl-D-alanyl-D-alanine + UDP-N-acetyl-alpha-D-glucosamine = di-trans,octa-cis-undecaprenyl diphospho-[N-acetyl-alpha-D-glucosaminyl-(1-&gt;4)]-N-acetyl-alpha-D-muramoyl-L-alanyl-D-glutamyl-meso-2,6-diaminopimeloyl-D-alanyl-D-alanine + UDP + H(+). The protein operates within cell wall biogenesis; peptidoglycan biosynthesis. In terms of biological role, cell wall formation. Catalyzes the transfer of a GlcNAc subunit on undecaprenyl-pyrophosphoryl-MurNAc-pentapeptide (lipid intermediate I) to form undecaprenyl-pyrophosphoryl-MurNAc-(pentapeptide)GlcNAc (lipid intermediate II). The protein is UDP-N-acetylglucosamine--N-acetylmuramyl-(pentapeptide) pyrophosphoryl-undecaprenol N-acetylglucosamine transferase of Phenylobacterium zucineum (strain HLK1).